The following is a 499-amino-acid chain: MRSSLAPAIRLMQSVSRDSCYRGFIIVMTFLFYTCYHLSRKPISIVKGQLHRNCSALPNPPNISENDTTWCSWAPFENTNYKELLGSLDTAFLVSYAIGMFFSGIFGERLPLRYYLSGGMIISGIFTSFMGFGYYWNIHALWYYILFQILNGLAQTTGWPAVVTCMGNWFGKGKRGFIMGIWNSHTAVGNILGSLIAGAFVSTAWGLSFIVPGIIIAAFGIFCFFFLVEYPEDVGCTPPQQPEEAKHDLENIPVSYNSTDTIFKSTESNADDSENAHTEVEHPQAISFIGALRIPGVVEFSLCLLFAKLVSYTFLYWLPLYIANDAQFDPKAAGDLSTLFDVGGIIGGILAGGISDYTGKSAITCTIMLILTAPMLFIYNYFGQTGISTTIAMLIICGILVNGPYSLITTAVSADLGTHESLQGNAKALSTVTAIIDGSGSIGAALGPSLAGVLSSRGWNYVFYMLIAADICACLLLARLVYKEIRSLCGGERKSYTEM.

The chain crosses the membrane as a helical span at residues 21–40 (YRGFIIVMTFLFYTCYHLSR). N-linked (GlcNAc...) asparagine glycans are attached at residues Asn53, Asn62, and Asn66. Helical transmembrane passes span 86 to 106 (GSLD…SGIF), 116 to 136 (LSGG…GYYW), 143 to 163 (YYIL…PAVV), 187 to 207 (AVGN…AWGL), 208 to 228 (SFIV…FFLV), 302 to 322 (LCLL…PLYI), 334 to 354 (GDLS…AGGI), 362 to 382 (AITC…YNYF), 391 to 411 (IAML…ITTA), 434 to 454 (AIID…AGVL), and 458 to 478 (GWNY…LLLA).

Belongs to the major facilitator superfamily. Organophosphate:Pi antiporter (OPA) (TC 2.A.1.4) family.

It is found in the endoplasmic reticulum membrane. The catalysed reaction is D-glucose 6-phosphate(in) + phosphate(out) = D-glucose 6-phosphate(out) + phosphate(in). Functionally, inorganic phosphate and glucose-6-phosphate antiporter. May transport cytoplasmic glucose-6-phosphate into the lumen of the endoplasmic reticulum and translocate inorganic phosphate into the opposite direction. This chain is Glucose-6-phosphate exchanger SLC37A2, found in Xenopus laevis (African clawed frog).